A 582-amino-acid polypeptide reads, in one-letter code: ATP-dependent lipid A-core flippase (582 aa).

5 helical membrane passes run 16-36 (LWPH…ALVI), 69-89 (FIIL…GYCM), 153-173 (IIGL…VLVV), 250-270 (LANP…LYLA), and 275-295 (IKET…FGLL). In terms of domain architecture, ABC transmembrane type-1 spans 29–310 (VAVVALVINA…LTSVTSDFQR (282 aa)). Residues 342-578 (IKVDNVTFTY…DGAYAQLHRI (237 aa)) enclose the ABC transporter domain. Residue 376-383 (GRSGSGKS) coordinates ATP.

It belongs to the ABC transporter superfamily. Lipid exporter (TC 3.A.1.106) family. As to quaternary structure, homodimer.

It is found in the cell inner membrane. The enzyme catalyses ATP + H2O + lipid A-core oligosaccharideSide 1 = ADP + phosphate + lipid A-core oligosaccharideSide 2.. In terms of biological role, involved in lipopolysaccharide (LPS) biosynthesis. Translocates lipid A-core from the inner to the outer leaflet of the inner membrane. Transmembrane domains (TMD) form a pore in the inner membrane and the ATP-binding domain (NBD) is responsible for energy generation. The chain is ATP-dependent lipid A-core flippase from Aliivibrio fischeri (strain ATCC 700601 / ES114) (Vibrio fischeri).